Here is a 1575-residue protein sequence, read N- to C-terminus: Ovochymase (1575 aa).

Positions 1 to 19 (MIVTFVALALSCCTPQVTA) are cleaved as a signal peptide. The Peptidase S1 1 domain occupies 36 to 280 (IVGGEMAKLG…YSSWIANYTQ (245 aa)). The cysteines at positions 61 and 77 are disulfide-linked. Catalysis depends on charge relay system residues His-76 and Asp-132. 3 disulfides stabilise this stretch: Cys-166–Cys-233, Cys-199–Cys-212, and Cys-223–Cys-256. Ser-227 (charge relay system) is an active-site residue. N-linked (GlcNAc...) asparagine glycosylation is found at Asn-277 and Asn-303. Cystine bridges form between Cys-300-Cys-330, Cys-358-Cys-386, Cys-432-Cys-460, and Cys-486-Cys-507. 2 CUB domains span residues 300–423 (CSSN…FHAV) and 432–545 (CGGI…YYFS). Asn-497, Asn-513, and Asn-549 each carry an N-linked (GlcNAc...) asparagine glycan. A Peptidase S1 2 domain is found at 575 to 810 (IVNGDIAIAG…YIDWIIATAN (236 aa)). Residues Cys-602 and Cys-618 are joined by a disulfide bond. Catalysis depends on charge relay system residues His-617 and Asp-665. Cystine bridges form between Cys-700/Cys-766, Cys-730/Cys-745, and Cys-756/Cys-786. The N-linked (GlcNAc...) asparagine glycan is linked to Asn-748. The active-site Charge relay system is the Ser-760. N-linked (GlcNAc...) asparagine glycosylation is present at Asn-810. Intrachain disulfides connect Cys-830-Cys-859, Cys-889-Cys-913, Cys-956-Cys-984, Cys-1012-Cys-1034, Cys-1080-Cys-1108, Cys-1135-Cys-1158, and Cys-1221-Cys-1246. CUB domains lie at 830–949 (CIQL…YRLE), 956–1070 (CGQL…FVEL), 1080–1197 (CGGV…YTAV), and 1221–1341 (CQDS…YKLM). N-linked (GlcNAc...) asparagine glycosylation is found at Asn-968, Asn-1027, Asn-1087, and Asn-1090. Residue Asn-1273 is glycosylated (N-linked (GlcNAc...) asparagine). Residues 1314–1575 (YNGGEISMLF…FLKWITKIIQ (262 aa)) form the Peptidase S1 3 domain. 2 disulfide bridges follow: Cys-1376–Cys-1392 and Cys-1493–Cys-1507. N-linked (GlcNAc...) asparagine glycosylation occurs at Asn-1511.

It belongs to the peptidase S1 family. In terms of tissue distribution, expressed in the testis and ovary. Expressed in the gonads and gametes. Expressed in the follicle cells covering the vitelline coat of ovarian egg.

The protein resides in the secreted. May be responsible for elevation of the vitelline coat at the late developmental stage of oogenesis and during fertilization in ovarian eggs. In Halocynthia roretzi (Sea squirt), this protein is Ovochymase.